We begin with the raw amino-acid sequence, 245 residues long: Orotidine 5'-phosphate decarboxylase (245 aa).

Substrate is bound by residues aspartate 22, lysine 44, 71 to 80, threonine 131, arginine 192, glutamine 201, glycine 221, and arginine 222; that span reads DLKFHDIPNT. The Proton donor role is filled by lysine 73.

It belongs to the OMP decarboxylase family. Type 1 subfamily. As to quaternary structure, homodimer.

The enzyme catalyses orotidine 5'-phosphate + H(+) = UMP + CO2. It functions in the pathway pyrimidine metabolism; UMP biosynthesis via de novo pathway; UMP from orotate: step 2/2. Functionally, catalyzes the decarboxylation of orotidine 5'-monophosphate (OMP) to uridine 5'-monophosphate (UMP). The protein is Orotidine 5'-phosphate decarboxylase of Shigella dysenteriae serotype 1 (strain Sd197).